A 344-amino-acid chain; its full sequence is N-acetyl-gamma-glutamyl-phosphate reductase (344 aa).

Residue Cys-150 is part of the active site.

It belongs to the NAGSA dehydrogenase family. Type 1 subfamily.

It is found in the cytoplasm. It catalyses the reaction N-acetyl-L-glutamate 5-semialdehyde + phosphate + NADP(+) = N-acetyl-L-glutamyl 5-phosphate + NADPH + H(+). The protein operates within amino-acid biosynthesis; L-arginine biosynthesis; N(2)-acetyl-L-ornithine from L-glutamate: step 3/4. Its function is as follows. Catalyzes the NADPH-dependent reduction of N-acetyl-5-glutamyl phosphate to yield N-acetyl-L-glutamate 5-semialdehyde. The chain is N-acetyl-gamma-glutamyl-phosphate reductase from Azotobacter vinelandii (strain DJ / ATCC BAA-1303).